The chain runs to 272 residues: Ribonuclease HII (272 aa).

The region spanning Lys-87–Leu-272 is the RNase H type-2 domain. A divalent metal cation-binding residues include Asp-93, Glu-94, and Asp-188.

It belongs to the RNase HII family. It depends on Mn(2+) as a cofactor. Mg(2+) serves as cofactor.

Its subcellular location is the cytoplasm. It carries out the reaction Endonucleolytic cleavage to 5'-phosphomonoester.. Functionally, endonuclease that specifically degrades the RNA of RNA-DNA hybrids. The chain is Ribonuclease HII from Clostridium perfringens (strain ATCC 13124 / DSM 756 / JCM 1290 / NCIMB 6125 / NCTC 8237 / Type A).